Reading from the N-terminus, the 224-residue chain is MKPQDLKVPFFWEERSTKIKDNVLYVPEHYFKHHQFIMPSWEEFFGNDNPISCELCSGNGDWVVAQAKETPEVNWIAVEKRFDRVRKIWSKMHNCRVTNLRIVCGDAQTFFLHYLGEAVVQRIIVNFPDPWPKSRHRKHRLFQDEFLNNVVRVLTEPGILILATDDKNYLLQAIQIMRQYLSPTMEDPYYCEVENYGNSWFETLWRSKGREIFYTEFVKKLGYS.

S-adenosyl-L-methionine is bound by residues E54, E79, D106, and D129. D129 is an active-site residue. Substrate contacts are provided by K133 and D165.

This sequence belongs to the class I-like SAM-binding methyltransferase superfamily. TrmB family.

The enzyme catalyses guanosine(46) in tRNA + S-adenosyl-L-methionine = N(7)-methylguanosine(46) in tRNA + S-adenosyl-L-homocysteine. It functions in the pathway tRNA modification; N(7)-methylguanine-tRNA biosynthesis. Functionally, catalyzes the formation of N(7)-methylguanine at position 46 (m7G46) in tRNA. This Chlamydia felis (strain Fe/C-56) (Chlamydophila felis) protein is tRNA (guanine-N(7)-)-methyltransferase.